The sequence spans 589 residues: Kelch-like protein 25 (589 aa).

The BTB domain maps to 46-114 (TDVTLWAGNR…AYSSKIIINE (69 aa)). The 102-residue stretch at 149-250 (CLGMMILSDA…LPSELLKEAV (102 aa)) folds into the BACK domain. Kelch repeat units follow at residues 296-340 (TLLI…AIGC), 341-388 (KVYV…ELEN), 389-444 (CLYV…SAKL), 446-492 (LFAF…VLGS), 493-538 (QIFI…ASGN), and 539-585 (KVYV…STWK).

As to quaternary structure, component of the BCR(KLHL25) E3 ubiquitin ligase complex, at least composed of cul3, klhl25 and rbx1.

It participates in protein modification; protein ubiquitination. Functionally, substrate-specific adapter of a BCR (BTB-CUL3-RBX1) E3 ubiquitin ligase complex involved in various processes, such as translation homeostasis and lipid synthesis. The BCR(KLHL25) ubiquitin ligase complex acts by mediating ubiquitination of hypophosphorylated eif4ebp1 (4E-BP1): ubiquitination and subsequent degradation of hypophosphorylated EIF4EBP1 (4E-BP1) probably serves as a homeostatic mechanism to maintain translation and prevent eIF4E inhibition when eIF4E levels are low. The BCR(KLHL25) complex also acts as a regulator of lipid synthesis by mediating ubiquitination and degradation of ACLY, thereby inhibiting lipid synthesis. The protein is Kelch-like protein 25 of Xenopus tropicalis (Western clawed frog).